We begin with the raw amino-acid sequence, 362 residues long: Adenosine deaminase (362 aa).

Positions 19 and 21 each coordinate Zn(2+). Substrate-binding residues include His21, Asp23, and Gly181. His208 provides a ligand contact to Zn(2+). The active-site Proton donor is the Glu211. Position 300 (Asp300) interacts with Zn(2+).

It belongs to the metallo-dependent hydrolases superfamily. Adenosine and AMP deaminases family. Adenosine deaminase subfamily. Zn(2+) serves as cofactor.

It catalyses the reaction adenosine + H2O + H(+) = inosine + NH4(+). The enzyme catalyses 2'-deoxyadenosine + H2O + H(+) = 2'-deoxyinosine + NH4(+). Catalyzes the hydrolytic deamination of adenosine and 2-deoxyadenosine. This is Adenosine deaminase from Mycobacterium ulcerans (strain Agy99).